We begin with the raw amino-acid sequence, 149 residues long: Nucleoside diphosphate kinase (149 aa).

ATP is bound by residues lysine 9, phenylalanine 57, arginine 85, threonine 91, arginine 102, and asparagine 112. Histidine 115 serves as the catalytic Pros-phosphohistidine intermediate.

Belongs to the NDK family. In terms of assembly, homotetramer. Mg(2+) serves as cofactor.

The protein localises to the cytoplasm. It carries out the reaction dZDP + ATP = dZTP + ADP. The catalysed reaction is a 2'-deoxyribonucleoside 5'-diphosphate + ATP = a 2'-deoxyribonucleoside 5'-triphosphate + ADP. The enzyme catalyses a ribonucleoside 5'-diphosphate + ATP = a ribonucleoside 5'-triphosphate + ADP. It participates in purine metabolism. Major role in the synthesis of nucleoside triphosphates other than ATP. The ATP gamma phosphate is transferred to the NDP beta phosphate via a ping-pong mechanism, using a phosphorylated active-site intermediate. In terms of biological role, (Microbial infection) Catalyzes the phosphorylation of dZDP to dZTP, when the bacterium is infected by a phage that produces the substrate for the synthesis of dZTP (2- amino-2'-deoxyadenosine 5'-triphosphate), which is then used by the phage as a DNA polymerase substrate. The sequence is that of Nucleoside diphosphate kinase from Picosynechococcus sp. (strain ATCC 27264 / PCC 7002 / PR-6) (Agmenellum quadruplicatum).